The primary structure comprises 599 residues: UvrABC system protein C (599 aa).

The region spanning 18-96 (QLPGVYKMLG…IKQHRPPYNI (79 aa)) is the GIY-YIG domain. Residues 207 to 242 (KELNQELIAKMEQAAADLEFEKAVFYRDRLSLLREV) enclose the UVR domain.

This sequence belongs to the UvrC family. In terms of assembly, interacts with UvrB in an incision complex.

It localises to the cytoplasm. Its function is as follows. The UvrABC repair system catalyzes the recognition and processing of DNA lesions. UvrC both incises the 5' and 3' sides of the lesion. The N-terminal half is responsible for the 3' incision and the C-terminal half is responsible for the 5' incision. The sequence is that of UvrABC system protein C from Acinetobacter baumannii (strain SDF).